The following is an 823-amino-acid chain: DNA ligase (823 aa).

NAD(+)-binding positions include 31–35 (DDAFD) and 73–74 (SQ). The N6-AMP-lysine intermediate role is filled by lysine 100. The NAD(+) site is built by arginine 121, glutamate 163, lysine 275, and lysine 296. Cysteine 387, cysteine 390, cysteine 403, and cysteine 408 together coordinate Zn(2+). BRCT domains are found at residues 562–655 (QAES…TGET), 654–742 (ETVH…DAHV), and 741–823 (HVHA…TPGT).

This sequence belongs to the NAD-dependent DNA ligase family. LigA subfamily. Requires Mg(2+) as cofactor. It depends on Mn(2+) as a cofactor.

It carries out the reaction NAD(+) + (deoxyribonucleotide)n-3'-hydroxyl + 5'-phospho-(deoxyribonucleotide)m = (deoxyribonucleotide)n+m + AMP + beta-nicotinamide D-nucleotide.. Functionally, DNA ligase that catalyzes the formation of phosphodiester linkages between 5'-phosphoryl and 3'-hydroxyl groups in double-stranded DNA using NAD as a coenzyme and as the energy source for the reaction. It is essential for DNA replication and repair of damaged DNA. The polypeptide is DNA ligase (Treponema pallidum (strain Nichols)).